The sequence spans 322 residues: p55-v-Fos-transforming protein (322 aa).

The disordered stretch occupies residues 69-95 (APGGRGQSIGRRGKVEQLSPEEEEKRR). A bZIP domain is found at 91–154 (EEKRRIRRER…EKLEFILAAH (64 aa)). Residues 93-113 (KRRIRRERNKMAAAKCRNRRR) form a basic motif region. The segment at 119–147 (LQAETDQLEEEKSALQAEIANLLKEKEKL) is leucine-zipper. The interval 298–322 (AAHRKGSSSNEPSSDSLSSPTLLAL) is disordered. Positions 304-316 (SSSNEPSSDSLSS) are enriched in low complexity.

This sequence belongs to the bZIP family. Fos subfamily.

The protein resides in the host nucleus. This is p55-v-Fos-transforming protein (V-FOS) from Galliformes.